A 199-amino-acid chain; its full sequence is 7-methyl-GTP pyrophosphatase (199 aa).

Aspartate 74 acts as the Proton acceptor in catalysis.

This sequence belongs to the Maf family. YceF subfamily. The cofactor is a divalent metal cation.

The protein resides in the cytoplasm. It carries out the reaction N(7)-methyl-GTP + H2O = N(7)-methyl-GMP + diphosphate + H(+). Its function is as follows. Nucleoside triphosphate pyrophosphatase that hydrolyzes 7-methyl-GTP (m(7)GTP). May have a dual role in cell division arrest and in preventing the incorporation of modified nucleotides into cellular nucleic acids. The sequence is that of 7-methyl-GTP pyrophosphatase from Cupriavidus pinatubonensis (strain JMP 134 / LMG 1197) (Cupriavidus necator (strain JMP 134)).